The following is an 88-amino-acid chain: Small ribosomal subunit protein uS15 (88 aa).

It belongs to the universal ribosomal protein uS15 family. Part of the 30S ribosomal subunit. Forms a bridge to the 50S subunit in the 70S ribosome, contacting the 23S rRNA.

In terms of biological role, one of the primary rRNA binding proteins, it binds directly to 16S rRNA where it helps nucleate assembly of the platform of the 30S subunit by binding and bridging several RNA helices of the 16S rRNA. Forms an intersubunit bridge (bridge B4) with the 23S rRNA of the 50S subunit in the ribosome. In Leptospira borgpetersenii serovar Hardjo-bovis (strain JB197), this protein is Small ribosomal subunit protein uS15.